The following is a 54-amino-acid chain: Ovomucoid (54 aa).

In terms of domain architecture, Kazal-like spans 4-54 (VDCSDYPKPACTVEYMPLCGSDNKTYDNKCNFCNAVVDSNGTLTLSHFGKC). 3 cysteine pairs are disulfide-bonded: C6–C36, C14–C33, and C22–C54. N43 carries an N-linked (GlcNAc...) asparagine glycan.

It localises to the secreted. In Anser anser anser (Western greylag goose), this protein is Ovomucoid.